A 332-amino-acid polypeptide reads, in one-letter code: Ferredoxin--NADP reductase 2 (332 aa).

Residues glutamate 37, glutamine 45, tyrosine 50, valine 90, phenylalanine 124, aspartate 285, and threonine 326 each coordinate FAD.

This sequence belongs to the ferredoxin--NADP reductase type 2 family. As to quaternary structure, homodimer. It depends on FAD as a cofactor.

The enzyme catalyses 2 reduced [2Fe-2S]-[ferredoxin] + NADP(+) + H(+) = 2 oxidized [2Fe-2S]-[ferredoxin] + NADPH. The polypeptide is Ferredoxin--NADP reductase 2 (Bacillus pumilus (strain SAFR-032)).